A 280-amino-acid chain; its full sequence is Shikimate dehydrogenase (NADP(+)) (280 aa).

Residues Ser-19–Ser-21 and Thr-66 each bind shikimate. The active-site Proton acceptor is the Lys-70. Glu-82 contributes to the NADP(+) binding site. The shikimate site is built by Asn-91 and Asp-106. Residues Gly-130–Ala-134 and Leu-222 contribute to the NADP(+) site. Tyr-224 provides a ligand contact to shikimate. Gly-245 contacts NADP(+).

Belongs to the shikimate dehydrogenase family. In terms of assembly, homodimer.

It carries out the reaction shikimate + NADP(+) = 3-dehydroshikimate + NADPH + H(+). The protein operates within metabolic intermediate biosynthesis; chorismate biosynthesis; chorismate from D-erythrose 4-phosphate and phosphoenolpyruvate: step 4/7. Involved in the biosynthesis of the chorismate, which leads to the biosynthesis of aromatic amino acids. Catalyzes the reversible NADPH linked reduction of 3-dehydroshikimate (DHSA) to yield shikimate (SA). In Methanococcus maripaludis (strain C7 / ATCC BAA-1331), this protein is Shikimate dehydrogenase (NADP(+)).